The chain runs to 156 residues: ATP synthase subunit b (156 aa).

A helical membrane pass occupies residues 1 to 21 (MSINATLLIQIIAFVLLIWFV).

Belongs to the ATPase B chain family. F-type ATPases have 2 components, F(1) - the catalytic core - and F(0) - the membrane proton channel. F(1) has five subunits: alpha(3), beta(3), gamma(1), delta(1), epsilon(1). F(0) has three main subunits: a(1), b(2) and c(10-14). The alpha and beta chains form an alternating ring which encloses part of the gamma chain. F(1) is attached to F(0) by a central stalk formed by the gamma and epsilon chains, while a peripheral stalk is formed by the delta and b chains.

It is found in the cell inner membrane. Functionally, f(1)F(0) ATP synthase produces ATP from ADP in the presence of a proton or sodium gradient. F-type ATPases consist of two structural domains, F(1) containing the extramembraneous catalytic core and F(0) containing the membrane proton channel, linked together by a central stalk and a peripheral stalk. During catalysis, ATP synthesis in the catalytic domain of F(1) is coupled via a rotary mechanism of the central stalk subunits to proton translocation. In terms of biological role, component of the F(0) channel, it forms part of the peripheral stalk, linking F(1) to F(0). This is ATP synthase subunit b from Hydrogenovibrio crunogenus (strain DSM 25203 / XCL-2) (Thiomicrospira crunogena).